A 629-amino-acid polypeptide reads, in one-letter code: Dual specificity tyrosine-phosphorylation-regulated kinase 1B (629 aa).

Phosphotyrosine is present on Tyr63. The interval 67–86 (KKRRAQQAPPQDSSTKKEKK) is disordered. The short motif at 69-86 (RRAQQAPPQDSSTKKEKK) is the Bipartite nuclear localization signal element. Phosphotyrosine is present on residues Tyr92 and Tyr111. Positions 111 to 431 (YEIDSLIGKG…PLGALQHGFF (321 aa)) constitute a Protein kinase domain. 117–125 (IGKGSFGQV) contributes to the ATP binding site. Tyr129 carries the phosphotyrosine modification. Lys140 is a binding site for ATP. The residue at position 171 (Tyr171) is a Phosphotyrosine. 190–193 (FELL) serves as a coordination point for ATP. Asp239 serves as the catalytic Proton acceptor. The residue at position 262 (Ser262) is a Phosphoserine. A Phosphotyrosine; by autocatalysis modification is found at Tyr271. The residue at position 273 (Tyr273) is a Phosphotyrosine. A disordered region spans residues 380–399 (GVQTGGPGGRRAGEPGHSPA). Tyr401 bears the Phosphotyrosine mark. Disordered regions lie at residues 436–480 (DEAT…SNDN) and 496–629 (PITD…AASS). The span at 438–477 (ATNTGPAGSSASTSPAPLDTCPSSSTASSISSSGGSSGSS) shows a compositional bias: low complexity. Residues 480-520 (NRAYRYSNRYCGGPGPPITDCEMNSPQVLPSQPLRPWAGGD) form an interaction with RANBP9 region. Composition is skewed to pro residues over residues 552–562 (PPSPTSPPPPE) and 574–585 (DCSPPPPAPAPQ). Ser624 is subject to Phosphoserine.

Belongs to the protein kinase superfamily. CMGC Ser/Thr protein kinase family. MNB/DYRK subfamily. In terms of assembly, dimer. Interacts with DCOHM, MAP2K3/MKK3, RANBP9 and TCF1/HNF1A. Part of a complex consisting of RANBP9, RAN, DYRK1B and COPS5. Interacts with DCAF7. Interacts with RNF169. In terms of processing, phosphorylated by MAP kinase. Tyrosine phosphorylation may be required for dimerization. In terms of tissue distribution, isoform 1 and isoform 2 are broadly expressed. Isoform 3 seems specific for skeletal muscle (at protein level).

The protein localises to the nucleus. Its subcellular location is the nucleolus. It is found in the chromosome. It carries out the reaction L-seryl-[protein] + ATP = O-phospho-L-seryl-[protein] + ADP + H(+). It catalyses the reaction L-threonyl-[protein] + ATP = O-phospho-L-threonyl-[protein] + ADP + H(+). The catalysed reaction is L-tyrosyl-[protein] + ATP = O-phospho-L-tyrosyl-[protein] + ADP + H(+). Its activity is regulated as follows. Inhibited by RANBP9. Dual-specificity kinase which possesses both serine/threonine and tyrosine kinase activities. Plays an essential role in ribosomal DNA (rDNA) double-strand break repair and rDNA copy number maintenance. During DNA damage, mediates transcription silencing in part via phosphorylating and enforcing DSB accumulation of the histone methyltransferase EHMT2. Enhances the transcriptional activity of TCF1/HNF1A and FOXO1. Inhibits epithelial cell migration. Mediates colon carcinoma cell survival in mitogen-poor environments. Inhibits the SHH and WNT1 pathways, thereby enhancing adipogenesis. In addition, promotes expression of the gluconeogenic enzyme glucose-6-phosphatase catalytic subunit 1 (G6PC1). This Mus musculus (Mouse) protein is Dual specificity tyrosine-phosphorylation-regulated kinase 1B (Dyrk1b).